Consider the following 493-residue polypeptide: Aspartyl/glutamyl-tRNA(Asn/Gln) amidotransferase subunit B (493 aa).

The segment at 473–493 (KSGGKANPKQAADLVNKRLTE) is disordered.

This sequence belongs to the GatB/GatE family. GatB subfamily. In terms of assembly, heterotrimer of A, B and C subunits.

It catalyses the reaction L-glutamyl-tRNA(Gln) + L-glutamine + ATP + H2O = L-glutaminyl-tRNA(Gln) + L-glutamate + ADP + phosphate + H(+). The enzyme catalyses L-aspartyl-tRNA(Asn) + L-glutamine + ATP + H2O = L-asparaginyl-tRNA(Asn) + L-glutamate + ADP + phosphate + 2 H(+). In terms of biological role, allows the formation of correctly charged Asn-tRNA(Asn) or Gln-tRNA(Gln) through the transamidation of misacylated Asp-tRNA(Asn) or Glu-tRNA(Gln) in organisms which lack either or both of asparaginyl-tRNA or glutaminyl-tRNA synthetases. The reaction takes place in the presence of glutamine and ATP through an activated phospho-Asp-tRNA(Asn) or phospho-Glu-tRNA(Gln). This is Aspartyl/glutamyl-tRNA(Asn/Gln) amidotransferase subunit B from Treponema denticola (strain ATCC 35405 / DSM 14222 / CIP 103919 / JCM 8153 / KCTC 15104).